A 216-amino-acid polypeptide reads, in one-letter code: DNA-binding protein HupB (216 aa).

Position 2 (Gly-2) is a propeptide, removed; alternate. Residue Met-3 is modified to N-acetylmethionine. Residues Met-3–Ser-92 form a bacterial histone-like domain region. N6-acetyllysine occurs at positions 5, 74, 88, 105, 118, and 135. Residues Pro-102–Lys-216 form a disordered region. The tract at residues Ala-103–Lys-216 is degenerate repeats region. Residues Val-104–Lys-114 are compositionally biased toward low complexity. The segment covering Lys-115–Lys-216 has biased composition (basic residues). Residue Lys-140 is modified to N6,N6,N6-trimethyllysine. Lys-148 and Lys-169 each carry N6-acetyllysine.

It belongs to the bacterial histone-like protein family. Long actinobacterial subfamily. In terms of assembly, oligomerizes. Interacts with topoisomerase 1 (topA). Interacts with Eis. Interacts with antigen 85 proteins (fbpA, fbpB, fbpC). Post-translationally, probably acetylated by Eis in vivo. In vitro acetylated by Eis (strain H37Rv and H37Ra) on many more residues than those identified in vivo. Deacetylated in vitro by NAD-dependent protein deacylase (Rv1151c). Trimethylated on Lys-140 by human SUV39H1; trimethylation inhibits mycobacterial growth. SUV39H1 probably also trimethylates another residue. In terms of processing, probably succinylated by Rv0802c and desuccinylated by NAD-dependent protein deacylase (Rv1151c).

The protein localises to the cytoplasm. It localises to the nucleoid. It is found in the secreted. The protein resides in the cell wall. The catalysed reaction is 4 Fe(2+) + O2 + 4 H(+) = 4 Fe(3+) + 2 H2O. In terms of biological role, a nucleoid-associated protein (NAP) that probably plays a role in chromosome compactation. Binds DNA non-specifically, with greater affinity for supercoiled than linear DNA, binds well to nicked DNA, gapped and cruciform DNA. Has a preference for A:T rich DNA. Required for activation of the mtbB operon. Binds the mtbB promoter in the presence of iron, binding is seen with as little as 25 uM Fe(2+) and increases with increasing Fe(2+). RNase E and HupB jointly contribute to cellular adaptation to changing growth conditions and survival during antibiotic treatment and in the host. Plays a role in stress survival. Stimulates supercoiling relaxation by topoisomerase 1 (Top1, topA). Functionally, binds Fe(3+) but not Fe(2+). Has ferroxidase activity, converts Fe(2+) into Fe(3+) and in the presence of H(2)O(2) prevents the generation of hydroxyl radicals (the Fenton reaction). Protects DNA from damage in the presence of FeSO(4) and H(2)O(2). May function in iron storage. Involved in iron uptake by bacteria (either Fe(3+) or extracellular carboxymycobactin); antibodies against HupB block uptake of both. Following uptake iron is mostly found in the iron siderophores carboxymycobactin (CMb, extracellular) or mycobactin (Mb, lipophilic). Facilitates transfer of iron from CMb to Mb when liposomes plus a cell wall lysate are incubated with CMb. Binds iron, ferri-CMb and ferri-Mb; has 10-fold higher affinity for ferri-Mb. Suggested to transfer iron from CBm to Mb at the cell membrane. Its function is as follows. Required for biofilm formation; trimethylation by recombinant human SUV39H1 (a histone methyltransferase) inhibits biofilm formation. Induces lymphoproliferation, particularly in health tuberculin reactors, and is immunogenic. Maybe involved in pathogenesis of inflammatory bowel disease (IBD) in patients with ulcerative colitis and Crohn disease (CD). Bound by anti-neutrophil cytoplasmic antibodies (pANCA), which are a hallmark of IBD. The binding is due to pANCA directed against H1-3 cross-reacting with DBH epitopes. In CD, target of a strong IgA response. May play a role in cell wall assembly. In vitro at low levels enhances formation of TMM and TDM by antigen 85 proteins (fbpA, fbpB, fbpC), at higher levels inhibits TMM and TDM formation. The polypeptide is DNA-binding protein HupB (Mycobacterium tuberculosis (strain ATCC 25618 / H37Rv)).